We begin with the raw amino-acid sequence, 143 residues long: Flagellar assembly factor FliW (143 aa).

This sequence belongs to the FliW family. As to quaternary structure, interacts with translational regulator CsrA and flagellin(s).

Its subcellular location is the cytoplasm. Acts as an anti-CsrA protein, binds CsrA and prevents it from repressing translation of its target genes, one of which is flagellin. Binds to flagellin and participates in the assembly of the flagellum. In Clostridium novyi (strain NT), this protein is Flagellar assembly factor FliW.